The primary structure comprises 320 residues: MGKAVKKKYSGASSGGKEVDAEKHLTTVFKFNTDLGQHILKNPLVAQGIVDKAQIKPSDIVLEIGPGTGNLTVRILEQARKVVAVEFDPRMAAELTKRVHGTPVEKKLEILLGDFMKTELPYFDVCISNTPYQISSPLVFKLINQPKPPRVSILMFQREFAMRLLARPGDSLYCRLSANVQMWANVTHIMKVGKNNFRPPPKVESSVVRIEIKNPRPQVDFNEWDGLLRIVFVRKNRTIAAGFKSTTVLEILEKNYKAFLATQSAVPTTSSGDSLINEVKEKIEQVLSETGLAEKRAGKCDQTDFLKLLYGFHQVGIHFA.

Positions 38, 40, 65, 86, 114, and 129 each coordinate S-adenosyl-L-methionine.

This sequence belongs to the class I-like SAM-binding methyltransferase superfamily. rRNA adenine N(6)-methyltransferase family.

The catalysed reaction is adenosine(1779)/adenosine(1780) in 18S rRNA + 4 S-adenosyl-L-methionine = N(6)-dimethyladenosine(1779)/N(6)-dimethyladenosine(1780) in 18S rRNA + 4 S-adenosyl-L-homocysteine + 4 H(+). In terms of biological role, specifically dimethylates two adjacent adenosines in the loop of a conserved hairpin near the 3'-end of 18S rRNA in the 40S particle. This chain is Dimethyladenosine transferase (DIM1), found in Kluyveromyces lactis (strain ATCC 8585 / CBS 2359 / DSM 70799 / NBRC 1267 / NRRL Y-1140 / WM37) (Yeast).